Here is a 295-residue protein sequence, read N- to C-terminus: MMRILLFVATNLAVVLVASITLSLFGFNGFMAANGVDLNLSSLLVFCAVFGFAGSLVSLFISKWMAKMSTGTQIISQPRTRHEQWLLQTVEELSREAGIKMPEVGIFPAYEANAFATGWNRNDALVAVSQGLLERFSPDEVRAVLAHEIGHVANGDMVTLALVQGVVNTFVMFFARIIGNFVDKVIFKNEEGQGIAYYVATIVAELILGILASMIVMWFSRRREYRADEAGAQLAGTSAMIGALQRLRVEQGLPVHMPDTMKAFGINGGLKHGLAGLLMSHPPLEDRIEALRRRG.

The next 2 membrane-spanning stretches (helical) occupy residues 4-24 and 41-61; these read ILLF…TLSL and SSLL…SLFI. Residue His147 coordinates Zn(2+). The active site involves Glu148. His151 provides a ligand contact to Zn(2+). 2 helical membrane-spanning segments follow: residues 158–178 and 199–219; these read VTLA…ARII and VATI…VMWF. Glu224 is a Zn(2+) binding site.

It belongs to the peptidase M48B family. Zn(2+) is required as a cofactor.

It is found in the cell inner membrane. This is Protease HtpX from Pseudomonas putida (strain GB-1).